Consider the following 239-residue polypeptide: Serine protease SplD (239 aa).

Positions 1-36 (MNKNIIIKSIAALTILTSITGVGTTVVDGIQQTAKA) are cleaved as a signal peptide. Residues His75, Asp114, and Ser192 each act as charge relay system in the active site.

This sequence belongs to the peptidase S1B family.

The protein localises to the secreted. The polypeptide is Serine protease SplD (splD) (Staphylococcus aureus (strain Mu3 / ATCC 700698)).